The chain runs to 337 residues: Inositol 2-dehydrogenase (337 aa).

It belongs to the Gfo/Idh/MocA family. In terms of assembly, homotetramer.

The enzyme catalyses myo-inositol + NAD(+) = scyllo-inosose + NADH + H(+). Involved in the oxidation of myo-inositol (MI) to 2-keto-myo-inositol (2KMI or 2-inosose). The sequence is that of Inositol 2-dehydrogenase from Burkholderia ambifaria (strain MC40-6).